The following is a 201-amino-acid chain: Retinol-binding protein 4 (201 aa).

The N-terminal stretch at methionine 1–glycine 18 is a signal peptide. Disulfide bonds link cysteine 22–cysteine 178, cysteine 88–cysteine 192, and cysteine 138–cysteine 147. Glutamine 116 contacts substrate. Arginine 139 is subject to Omega-N-methylarginine.

The protein belongs to the calycin superfamily. Lipocalin family. As to quaternary structure, interacts with TTR. Interaction with TTR prevents its loss by filtration through the kidney glomeruli. Interacts with STRA6.

The protein resides in the secreted. Retinol-binding protein that mediates retinol transport in blood plasma. Delivers retinol from the liver stores to the peripheral tissues. Transfers the bound all-trans retinol to STRA6, that then facilitates retinol transport across the cell membrane. The chain is Retinol-binding protein 4 (RBP4) from Oryctolagus cuniculus (Rabbit).